Consider the following 362-residue polypeptide: MKASILTKLEMLVERYEEVQHLLGDPGVIGDQDKFRALSKEYSQLEEVTKCFTAYKQAQEDLVAAEEMAKEDDAEMREMAQEEIKAAKVAIEDLAAELQILLLPKDPNDDRNCFLEIRAGAGGDEAGIFAGDLFRMYSKFAEKRGWRIEVMSANEAEHGGYKEMIAKVNGDGAYGFLKFESGGHRVQRVPATESQGRVHTSACTVAIMPEIPEAEIPEIKASDLKIDTFRSSGAGGQHVNTTDSAIRITHLPTGTVVECQDERSQHKNKAKAMAVLAARIVQAEEAKRAAEVSDTRRNLLGSGDRSDRIRTYNYPQGRVSDHRINLTIYRLSEVMEGDLQSLIDPVIQEHQADQLAALAENN.

Glutamine 237 carries the post-translational modification N5-methylglutamine.

It belongs to the prokaryotic/mitochondrial release factor family. In terms of processing, methylated by PrmC. Methylation increases the termination efficiency of RF1.

It localises to the cytoplasm. Its function is as follows. Peptide chain release factor 1 directs the termination of translation in response to the peptide chain termination codons UAG and UAA. This chain is Peptide chain release factor 1, found in Vibrio vulnificus (strain CMCP6).